Consider the following 121-residue polypeptide: Peptidyl-tRNA hydrolase (121 aa).

The protein belongs to the PTH2 family.

The protein resides in the cytoplasm. The catalysed reaction is an N-acyl-L-alpha-aminoacyl-tRNA + H2O = an N-acyl-L-amino acid + a tRNA + H(+). In terms of biological role, the natural substrate for this enzyme may be peptidyl-tRNAs which drop off the ribosome during protein synthesis. The polypeptide is Peptidyl-tRNA hydrolase (Staphylothermus marinus (strain ATCC 43588 / DSM 3639 / JCM 9404 / F1)).